We begin with the raw amino-acid sequence, 85 residues long: UPF0386 protein MXAN_1729 (85 aa).

This sequence belongs to the UPF0386 family.

This chain is UPF0386 protein MXAN_1729, found in Myxococcus xanthus (strain DK1622).